Reading from the N-terminus, the 125-residue chain is Kappa-casein (125 aa).

Positions 42 to 63 (LPNIDPPTVERRPRPRPSFIAI) are disordered. O-linked (GalNAc...) threonine glycosylation is present at Thr97. The residue at position 104 (Ser104) is a Phosphoserine; alternate. An O-linked (GalNAc...) serine; alternate glycan is attached at Ser104. Thr121 carries an O-linked (GalNAc...) threonine glycan. Ser122 is modified (phosphoserine).

This sequence belongs to the kappa-casein family. Mammary gland specific. Secreted in milk.

It localises to the secreted. Functionally, kappa-casein stabilizes micelle formation, preventing casein precipitation in milk. The sequence is that of Kappa-casein (CSN3) from Lama guanicoe (Guanaco).